Here is a 149-residue protein sequence, read N- to C-terminus: Arginine repressor (149 aa).

This sequence belongs to the ArgR family.

Its subcellular location is the cytoplasm. The protein operates within amino-acid biosynthesis; L-arginine biosynthesis [regulation]. Its function is as follows. Regulates arginine biosynthesis genes. The protein is Arginine repressor of Chlorobaculum parvum (strain DSM 263 / NCIMB 8327) (Chlorobium vibrioforme subsp. thiosulfatophilum).